The chain runs to 723 residues: Multiple organellar RNA editing factor 4, mitochondrial (723 aa).

Residues 1–64 (MAMFSHRLRR…RLFSTTQYQY (64 aa)) constitute a mitochondrion transit peptide. Disordered stretches follow at residues 180 to 303 (ITPG…GQTQ), 318 to 474 (RQEM…EGQP), and 663 to 723 (QNGG…NSRI). A compositionally biased stretch (basic and acidic residues) spans 191–204 (EGFDSLKKESKPEQ). Composition is skewed to polar residues over residues 219–233 (TSGQ…TLPD), 273–303 (GQWQ…GQTQ), 327–365 (GQAQ…QGAQ), and 373–430 (QGAQ…NYSP). Low complexity-rich tracts occupy residues 459–474 (QGQG…EGQP) and 682–695 (QGFS…TFQQ). The span at 714–723 (TETRKPNSRI) shows a compositional bias: basic and acidic residues.

Belongs to the MORF family. Heterodimers with MORF8/RIP1, MORF1/RIP8 and MORF3/RIP3.

It localises to the mitochondrion. Involved in organellar RNA editing. Required for the processing of few RNA editing site in mitochondria. The polypeptide is Multiple organellar RNA editing factor 4, mitochondrial (Arabidopsis thaliana (Mouse-ear cress)).